A 68-amino-acid chain; its full sequence is Dermaseptin-H5 (68 aa).

The first 17 residues, lysine 1–cysteine 17, serve as a signal peptide directing secretion. Residues glutamate 18–methionine 38 constitute a propeptide that is removed on maturation. A disordered region spans residues glutamate 19–arginine 40. Over residues glutamate 25–glutamine 35 the composition is skewed to acidic residues. Leucine 65 carries the leucine amide modification. Positions glutamate 67–glutamine 68 are excised as a propeptide.

In terms of tissue distribution, expressed by the skin glands.

The protein resides in the secreted. Has antibacterial activity against the Gram-negative bacteria E.coli ATCC 11775 (MIC=0.5 uM), and the Gram-positive bacteria S.aureus ATCC 12600 (MIC=0.5 uM) and M.luteus ATCC 49732 (MIC=2.0 uM). Does not inhibit the growth of the fungus C.albicans. Probably acts by disturbing membrane functions with its amphipathic structure. This is Dermaseptin-H5 from Pithecopus azureus (Orange-legged monkey tree frog).